The sequence spans 320 residues: N-acetylneuraminate lyase (320 aa).

The aceneuramate site is built by Thr-51 and Thr-52. The Proton donor role is filled by Tyr-143. The active-site Schiff-base intermediate with substrate is Lys-173. 5 residues coordinate aceneuramate: Thr-175, Gly-199, Asp-201, Glu-202, and Ser-218. Ser-308 is subject to Phosphoserine.

This sequence belongs to the DapA family. NanA subfamily. In terms of assembly, homotetramer.

It is found in the cytoplasm. The catalysed reaction is aceneuramate = aldehydo-N-acetyl-D-mannosamine + pyruvate. Its pathway is amino-sugar metabolism; N-acetylneuraminate degradation. In terms of biological role, catalyzes the cleavage of N-acetylneuraminic acid (sialic acid) to form pyruvate and N-acetylmannosamine via a Schiff base intermediate. It prevents sialic acids from being recycled and returning to the cell surface. Involved in the N-glycolylneuraminic acid (Neu5Gc) degradation pathway. This Mus musculus (Mouse) protein is N-acetylneuraminate lyase.